Consider the following 308-residue polypeptide: MTTGKLIDRFEGPSGRAVLEEVLLEQKLVLGNQDLARRLAEVGTLEEIAKDAVLITEDAEDSEVYFIITGHFQVKVHDREVATRGGGDHVGEMAALVPTAKRSATVLATEPSIVLKVSAADFKSIADAYPSVWRQVTRQLVDRLHQRNDMVLPAHQSSHVFIICSVEALPIARAIENNLEHDKFFVKTWTQGVFRASQYALESLEEQLDECDFAIAIAQPDDSVTMREETKNTPRDNVIFELGLFVGRLGRARTFLLEPRGDEVHLPSDLKGLTTIGYRLTKSEDQLPSSLSPACNQLRTIFNKLGPK.

54 to 143 (LITEDAEDSE…RQVTRQLVDR (90 aa)) serves as a coordination point for a nucleoside 3',5'-cyclic phosphate. The TIR-like stretch occupies residues 160 to 278 (VFIICSVEAL…DLKGLTTIGY (119 aa)).

Its subcellular location is the cytoplasm. The enzyme catalyses NAD(+) + H2O = ADP-D-ribose + nicotinamide + H(+). In terms of biological role, pycsar (pyrimidine cyclase system for antiphage resistance) provides immunity against bacteriophage. The pyrimidine cyclase (PycC) synthesizes cyclic nucleotides in response to infection; these serve as specific second messenger signals. The signals activate the adjacent effector, leading to bacterial cell death and abortive phage infection. A clade A Pycsar system. Its function is as follows. The effector gene of a two-gene Pycsar system. Expression of this and adjacent uridylate cyclase PaPycC (AC P0DV40) probably confers resistance to bacteriophage. The genes are probably only expressed in response to bacteriophage infection. Probably only responds to cUMP (produced by its cognate NTP cyclase), acts by depleting cellular NAD(+) levels. The sequence is that of Pycsar effector protein PaPycTIR from Pseudomonas aeruginosa.